Consider the following 212-residue polypeptide: Fibrillarin-like rRNA/tRNA 2'-O-methyltransferase (212 aa).

Positions 1–37 (MSEPNLPAGVERREIGGETRLATRGPPVYGEPTADGW) are disordered. S-adenosyl-L-methionine-binding positions include 74-75 (TT), 90-91 (EF), 115-116 (DA), and 136-139 (DVAT).

The protein belongs to the methyltransferase superfamily. Fibrillarin family. In terms of assembly, interacts with nop5. Component of box C/D small ribonucleoprotein (sRNP) particles that contain rpl7ae, FlpA and nop5, plus a guide RNA.

Involved in pre-rRNA and tRNA processing. Utilizes the methyl donor S-adenosyl-L-methionine to catalyze the site-specific 2'-hydroxyl methylation of ribose moieties in rRNA and tRNA. Site specificity is provided by a guide RNA that base pairs with the substrate. Methylation occurs at a characteristic distance from the sequence involved in base pairing with the guide RNA. In Halorubrum lacusprofundi (strain ATCC 49239 / DSM 5036 / JCM 8891 / ACAM 34), this protein is Fibrillarin-like rRNA/tRNA 2'-O-methyltransferase.